The following is a 1059-amino-acid chain: Carbamoyl phosphate synthase large chain (1059 aa).

The tract at residues 1–401 is carboxyphosphate synthetic domain; the sequence is MPKRQDISKI…AMLKAVRSLE (401 aa). The ATP site is built by R129, R169, G175, G176, R208, I210, E215, G241, I242, H243, Q284, and E298. The ATP-grasp 1 domain maps to 133 to 327; the sequence is KALMERLNEP…IAKMAAKIAV (195 aa). The Mg(2+) site is built by Q284, E298, and N300. The Mn(2+) site is built by Q284, E298, and N300. The interval 402-546 is oligomerization domain; it reads IGAIGLDDIT…YATYEQENES (145 aa). The interval 547-929 is carbamoyl phosphate synthetic domain; the sequence is IISTKKSVLV…ALYKAFIASN (383 aa). The region spanning 671-861 is the ATP-grasp 2 domain; sequence DQVIKELALP…LAQLATRVML (191 aa). Positions 707, 746, 748, 752, 777, 778, 779, 780, 820, and 832 each coordinate ATP. The Mg(2+) site is built by Q820, E832, and N834. Mn(2+) contacts are provided by Q820, E832, and N834. The region spanning 930 to 1059 is the MGS-like domain; that stretch reads IKVPRYGNVL…SRSFTVKEMH (130 aa). The tract at residues 930–1059 is allosteric domain; sequence IKVPRYGNVL…SRSFTVKEMH (130 aa).

It belongs to the CarB family. Composed of two chains; the small (or glutamine) chain promotes the hydrolysis of glutamine to ammonia, which is used by the large (or ammonia) chain to synthesize carbamoyl phosphate. Tetramer of heterodimers (alpha,beta)4. Mg(2+) serves as cofactor. It depends on Mn(2+) as a cofactor.

The enzyme catalyses hydrogencarbonate + L-glutamine + 2 ATP + H2O = carbamoyl phosphate + L-glutamate + 2 ADP + phosphate + 2 H(+). The catalysed reaction is hydrogencarbonate + NH4(+) + 2 ATP = carbamoyl phosphate + 2 ADP + phosphate + 2 H(+). It participates in amino-acid biosynthesis; L-arginine biosynthesis; carbamoyl phosphate from bicarbonate: step 1/1. It functions in the pathway pyrimidine metabolism; UMP biosynthesis via de novo pathway; (S)-dihydroorotate from bicarbonate: step 1/3. Functionally, large subunit of the glutamine-dependent carbamoyl phosphate synthetase (CPSase). CPSase catalyzes the formation of carbamoyl phosphate from the ammonia moiety of glutamine, carbonate, and phosphate donated by ATP, constituting the first step of 2 biosynthetic pathways, one leading to arginine and/or urea and the other to pyrimidine nucleotides. The large subunit (synthetase) binds the substrates ammonia (free or transferred from glutamine from the small subunit), hydrogencarbonate and ATP and carries out an ATP-coupled ligase reaction, activating hydrogencarbonate by forming carboxy phosphate which reacts with ammonia to form carbamoyl phosphate. In Leuconostoc mesenteroides subsp. mesenteroides (strain ATCC 8293 / DSM 20343 / BCRC 11652 / CCM 1803 / JCM 6124 / NCDO 523 / NBRC 100496 / NCIMB 8023 / NCTC 12954 / NRRL B-1118 / 37Y), this protein is Carbamoyl phosphate synthase large chain.